Consider the following 175-residue polypeptide: UPF0398 protein SUB1405 (175 aa).

The protein belongs to the UPF0398 family.

This Streptococcus uberis (strain ATCC BAA-854 / 0140J) protein is UPF0398 protein SUB1405.